A 316-amino-acid chain; its full sequence is Zinc finger protein 330 (316 aa).

Residues 1–24 (MPKKKTGARKKAENRREREKQLRA) are disordered. Positions 3-11 (KKKTGARKK) match the Nuclear localization signal motif. Basic and acidic residues predominate over residues 10–22 (KKAENRREREKQL). 4 C4-type zinc fingers span residues 42-58 (CDKCQRRQKNRAFCYFC), 67-104 (CAQCGKTKCMMKSSDCVIKHAGVYSTGLAMVGAICDFC), 129-149 (CVECERGVWDHGGRIFSCSFC), and 175-189 (CVSCNRLGQHSCLRC). The interval 227–299 (SMSTRSLKFG…ESSDLFNNLN (73 aa)) is disordered. The segment covering 268–291 (DDDEEEDEAEDEEEEDGKDSDAES) has biased composition (acidic residues). The residue at position 287 (serine 287) is a Phosphoserine.

It belongs to the NOA36 family.

The protein localises to the nucleus. The protein resides in the nucleolus. Its subcellular location is the chromosome. It localises to the centromere. The chain is Zinc finger protein 330 (Znf330) from Mus musculus (Mouse).